Here is a 451-residue protein sequence, read N- to C-terminus: Trigger factor (451 aa).

The 86-residue stretch at 173–258 folds into the PPIase FKBP-type domain; that stretch reads GDRVTLDFVG…LKKIEWAHLP (86 aa).

It belongs to the FKBP-type PPIase family. Tig subfamily.

The protein localises to the cytoplasm. The enzyme catalyses [protein]-peptidylproline (omega=180) = [protein]-peptidylproline (omega=0). Functionally, involved in protein export. Acts as a chaperone by maintaining the newly synthesized protein in an open conformation. Functions as a peptidyl-prolyl cis-trans isomerase. The sequence is that of Trigger factor from Cupriavidus necator (strain ATCC 17699 / DSM 428 / KCTC 22496 / NCIMB 10442 / H16 / Stanier 337) (Ralstonia eutropha).